The sequence spans 184 residues: Ribosome-recycling factor (184 aa).

This sequence belongs to the RRF family.

It is found in the cytoplasm. In terms of biological role, responsible for the release of ribosomes from messenger RNA at the termination of protein biosynthesis. May increase the efficiency of translation by recycling ribosomes from one round of translation to another. This is Ribosome-recycling factor from Clostridium botulinum (strain Langeland / NCTC 10281 / Type F).